The following is a 434-amino-acid chain: MPAAVSISQEILKPHLEIQGGHTLSRELKVSGAKNSALVLMTSALLSEGPLELHNVPQLTDIQGMADILASLGVRVKRSQETVWLQADGLHHAEPPYDLVNGLRASFFCIGPLLGRLGHAKVPLPGGCRIGARPVVEHIRGLKALGAMVKVEHGVVTASVPGTSRRLKGAAIVLDCPSVGATETILMAAVLAEGTSTIENAAQEPEVQDLAKMLNAMGARVSGAGGPIITIEGVERLHGCNYSVIPDRIEAGTFLIAAAITRSIVRVSPVIPEHLNAVLQKLRDCGCTLEIDKQGITLIPGDLHGVDIITQPFPGFPTDLQAPFMALLTTAKGTSVVTEKIYENRMQHVAELQRMGASIRLQGNTAVVEGIPQLSAAPVSGNDLRAAAALVLAGLAAHGISQVDGLNHLDRGYDEIETKLNASGAHILRHQPSG.

Phosphoenolpyruvate is bound at residue 34–35 (KN). A UDP-N-acetyl-alpha-D-glucosamine-binding site is contributed by R104. C128 functions as the Proton donor in the catalytic mechanism. Residue C128 is modified to 2-(S-cysteinyl)pyruvic acid O-phosphothioketal. Residues D319 and I341 each coordinate UDP-N-acetyl-alpha-D-glucosamine.

The protein belongs to the EPSP synthase family. MurA subfamily.

The protein localises to the cytoplasm. It carries out the reaction phosphoenolpyruvate + UDP-N-acetyl-alpha-D-glucosamine = UDP-N-acetyl-3-O-(1-carboxyvinyl)-alpha-D-glucosamine + phosphate. The protein operates within cell wall biogenesis; peptidoglycan biosynthesis. In terms of biological role, cell wall formation. Adds enolpyruvyl to UDP-N-acetylglucosamine. This is UDP-N-acetylglucosamine 1-carboxyvinyltransferase from Prochlorococcus marinus (strain MIT 9313).